Consider the following 1343-residue polypeptide: MVYSYSEKKRIRKDFGKRPKVLDIPYLLSIQLDSFKKFTDQDPTGERGFEAAFRSVFPIKSFSGNSELQYVSYKLGEPVFDVKECQIRGITYAAPLRVKLRMVLYDREAAPGTVKDIKEQEVYMGDIPLMTNNGTFVINGTERVIVSQLHRSPGVFFDHDRGKTHSSGKVLYNARIIPYRGSWLDFEFDPKDALFVRIDRRRKLPASIMLRALDYSTQDILDLFFDRVNFKIKKDSLVMDLVPERLRGETASYDIKDSDGSILVEKGRRVTARHIRQLEKSKTTELEVPVDYIEGKIAGQDYIDPDTGEVLVSANAEITLEDLAKLSMAGIKEISTLYINDLDNGAYMSDTLRIDSTTNRLEALVEIYRMMRPGEPPTKDAAEGLFQNLFFSEERYDLSKVGRMKFNRRLSIGEDEGSGILSKEDIVAVMKNIITIRNGGDEVDDIDHLGNRRIRSVGEMAENQFRVGLVRVERAVRERLSLGDLNELMPQDLINAKPISAAVKEFFGSSQLSQFMDQNNPLSEVTHKRRISALGPGGLTRERAGFEVRDVHPTHYGRLCPIETPEGPNIGLINSLASFARTNSYGFLETPYRKVEDGVVTDQIDYLSAIEEGRYVIAQANIDIDKNGRLLEEQVACRHKGDSTFMRGTDIQYMDVSPQQIISVAASLIPFLEHDDANRALMGANMQRQAVPTLRADKPLVGTGIERIIAVDSGVVVVAKRGGSIDYVDASRIVVKVNESELRPGEAGIDIYNLTKYTRSNQNTCINQRPCCSVGDPVVVGDVLADGPSTDLGDLAFGQNMRIAFMPWNGYNFEDSILISERVAQEDRFTTIHIQELSCIARDTKLGSEEITADIPNVGESALSKLDESGIVYIGAEVKGGDILVGKVTPKGETQLTPEEKLLRAIFGEKASDVKDSSLRVPNSVKGTIIDVQVFTRDGVEKDKRAVEIEEMHIAQAKKDLTEEFKILEEGVYGRARNLLLNAGFEQAQLDAIPRSHLLVQTIDDEAKQTELEQLAEQHDELKADFDKKFEIKRRKITQGDDLAPGVLKIVKVYLAVKRTIQPGDKMAGRHGNKGVISKINPVEDMPYDENGNPIDIVLNPLGVPSRMNIGQILEVHMGAAAKGIGDQITAMLEEQRQLAEIRGYIKEVYELGDEVLQRVDIDSFTDDEVLRLAKNLKGGIPIATPAFDGAKEKEIKEMLALAKLPTSGQRTLYDGRTGNEFERKVTVGYMYMLKLNHLVDDKMHARSTGSYSLVTQQPLGGKAQFGGQRFGEMEVWALEAYGAAYTLQEMLTVKSDDVNGRTQMYKNIVDGNYQMQPGMPESFNVLLKEIRSLGINIELDQD.

It belongs to the RNA polymerase beta chain family. As to quaternary structure, the RNAP catalytic core consists of 2 alpha, 1 beta, 1 beta' and 1 omega subunit. When a sigma factor is associated with the core the holoenzyme is formed, which can initiate transcription.

It carries out the reaction RNA(n) + a ribonucleoside 5'-triphosphate = RNA(n+1) + diphosphate. DNA-dependent RNA polymerase catalyzes the transcription of DNA into RNA using the four ribonucleoside triphosphates as substrates. This Shewanella violacea protein is DNA-directed RNA polymerase subunit beta.